We begin with the raw amino-acid sequence, 73 residues long: Putative membrane protein insertion efficiency factor (73 aa).

It belongs to the UPF0161 family.

The protein localises to the cell inner membrane. Could be involved in insertion of integral membrane proteins into the membrane. The polypeptide is Putative membrane protein insertion efficiency factor (Treponema denticola (strain ATCC 35405 / DSM 14222 / CIP 103919 / JCM 8153 / KCTC 15104)).